A 297-amino-acid chain; its full sequence is HTH-type transcriptional regulator ArgP (297 aa).

Residues 4 to 60 (PDYRTLQALDAVIRERGFERAAQKLCITQSAVSQRIKQLENMFGQPLLVRTVPPRPT) enclose the HTH lysR-type domain. The segment at residues 21–40 (FERAAQKLCITQSAVSQRIK) is a DNA-binding region (H-T-H motif).

It belongs to the LysR transcriptional regulatory family. Homodimer.

Its function is as follows. Controls the transcription of genes involved in arginine and lysine metabolism. This chain is HTH-type transcriptional regulator ArgP, found in Klebsiella pneumoniae (strain 342).